Reading from the N-terminus, the 287-residue chain is PPP2R1A-PPP2R2A-interacting phosphatase regulator 1 (287 aa).

The interval 1–44 is disordered; it reads MAQEKMELDLELPPGTGGSPAEGGGSGGGGGLRRSNSAPLIHGL. Residues 15–32 show a composition bias toward gly residues; the sequence is GTGGSPAEGGGSGGGGGL. Ser-35 is modified (phosphoserine). Ser-37 bears the Phosphoserine; by CHEK1 mark. Ser-45 is modified (phosphoserine). Residue Thr-47 is modified to Phosphothreonine. Ser-48, Ser-62, and Ser-76 each carry phosphoserine. A Glycyl lysine isopeptide (Lys-Gly) (interchain with G-Cter in SUMO1) cross-link involves residue Lys-89. Phosphoserine occurs at positions 143 and 147. Thr-149 carries the post-translational modification Phosphothreonine. 2 disordered regions span residues 167–189 and 236–287; these read SNGL…RSQS and GVCV…LSSK. Composition is skewed to low complexity over residues 178 to 189 and 246 to 257; these read PTTRFTTRRSQS and GNSSSAGSSCNS. Phosphoserine is present on residues Ser-187 and Ser-189. Residues 259 to 270 show a composition bias toward polar residues; the sequence is AKVSTTTDSPVS. Residues Ser-267, Ser-270, and Ser-276 each carry the phosphoserine modification.

The protein belongs to the FAM122 family. In terms of assembly, interacts with PPP2CA and PPP2R1A. Interacts (via its N-terminus) with PPP2R2A; the interaction is direct and this interaction inhibits PP2A activity. The CHEK1-mediated Ser-37 phosphorylated form interacts with 14-3-3 proteins. CHEK1-mediated phosphorylation at Ser-37 negatively regulates its ability to inhibit serine/threonine-protein phosphatase 2A (PP2A) activity. Phosphorylation leads to its release from the PP2A complex and its sequestration by 14-3-3 proteins in the cytoplasm resulting in its inability to translocate to the nucleus, where it otherwise inhibits PP2A.

Its subcellular location is the nucleus. The protein localises to the cytoplasm. In terms of biological role, acts as an inhibitor of serine/threonine-protein phosphatase 2A (PP2A) activity. Inhibits PP2A activity by blocking the substrate binding site on PPP2R2A and the active site of PPP2CA. Potentiates ubiquitin-mediated proteasomal degradation of serine/threonine-protein phosphatase 2A catalytic subunit alpha (PPP2CA). Inhibits PP2A-mediated dephosphorylation of WEE1, promoting ubiquitin-mediated proteolysis of WEE1, thereby releasing G2/M checkpoint. The polypeptide is PPP2R1A-PPP2R2A-interacting phosphatase regulator 1 (Homo sapiens (Human)).